The chain runs to 279 residues: Thymidylate synthase (279 aa).

Residue 133–134 coordinates dUMP; that stretch reads RR. Residue Cys154 is the Nucleophile of the active site. DUMP is bound by residues 178–181, Asn189, and 219–221; these read RSND and HIY. Residue Asp181 participates in (6R)-5,10-methylene-5,6,7,8-tetrahydrofolate binding. Ala278 provides a ligand contact to (6R)-5,10-methylene-5,6,7,8-tetrahydrofolate.

This sequence belongs to the thymidylate synthase family. Bacterial-type ThyA subfamily. Homodimer.

The protein resides in the cytoplasm. The enzyme catalyses dUMP + (6R)-5,10-methylene-5,6,7,8-tetrahydrofolate = 7,8-dihydrofolate + dTMP. Its pathway is pyrimidine metabolism; dTTP biosynthesis. In terms of biological role, catalyzes the reductive methylation of 2'-deoxyuridine-5'-monophosphate (dUMP) to 2'-deoxythymidine-5'-monophosphate (dTMP) while utilizing 5,10-methylenetetrahydrofolate (mTHF) as the methyl donor and reductant in the reaction, yielding dihydrofolate (DHF) as a by-product. This enzymatic reaction provides an intracellular de novo source of dTMP, an essential precursor for DNA biosynthesis. This Streptococcus sanguinis (strain SK36) protein is Thymidylate synthase.